The following is a 99-amino-acid chain: MAVFRSTLVLLLIIVCLTTYELHVHAADGAKVGEGVVKIDCGGRCKDRCSKSSRTKLCLRACNSCCSRCNCVPPGTSGNTHLCPCYASITTHGGRLKCP.

Residues 1–26 (MAVFRSTLVLLLIIVCLTTYELHVHA) form the signal peptide.

It belongs to the GASA family. Six disulfide bonds may be present. Dry seeds and maturating siliques.

It is found in the secreted. Gibberellin-regulated protein that may function in hormonal controlled steps of development such as seed germination, flowering and seed maturation. The protein is Gibberellin-regulated protein 2 (GASA2) of Arabidopsis thaliana (Mouse-ear cress).